The primary structure comprises 1158 residues: ATP-dependent helicase/deoxyribonuclease subunit B (1158 aa).

8-15 (GRAGTGKS) is a binding site for ATP. Cys-791, Cys-1112, Cys-1115, and Cys-1121 together coordinate [4Fe-4S] cluster.

The protein belongs to the helicase family. AddB/RexB type 1 subfamily. Heterodimer of AddA and AddB. Mg(2+) serves as cofactor. [4Fe-4S] cluster is required as a cofactor.

Its function is as follows. The heterodimer acts as both an ATP-dependent DNA helicase and an ATP-dependent, dual-direction single-stranded exonuclease. Recognizes the chi site generating a DNA molecule suitable for the initiation of homologous recombination. The AddB subunit has 5' -&gt; 3' nuclease activity but not helicase activity. The sequence is that of ATP-dependent helicase/deoxyribonuclease subunit B from Clostridium perfringens (strain SM101 / Type A).